A 129-amino-acid chain; its full sequence is Small ribosomal subunit protein uS11 (129 aa).

It belongs to the universal ribosomal protein uS11 family. Part of the 30S ribosomal subunit. Interacts with proteins S7 and S18. Binds to IF-3.

Its function is as follows. Located on the platform of the 30S subunit, it bridges several disparate RNA helices of the 16S rRNA. Forms part of the Shine-Dalgarno cleft in the 70S ribosome. This is Small ribosomal subunit protein uS11 from Bartonella quintana (strain Toulouse) (Rochalimaea quintana).